Consider the following 504-residue polypeptide: Probable phenylalanine--tRNA ligase beta subunit (504 aa).

In terms of domain architecture, B5 spans 270–346 (IKDKSYLLSI…ICYGFNNINM (77 aa)). 4 residues coordinate Mg(2+): Asp324, Asp330, Glu333, and Asp334.

It belongs to the phenylalanyl-tRNA synthetase beta subunit family. Type 2 subfamily. Tetramer of two alpha and two beta subunits. Requires Mg(2+) as cofactor.

It localises to the cytoplasm. It catalyses the reaction tRNA(Phe) + L-phenylalanine + ATP = L-phenylalanyl-tRNA(Phe) + AMP + diphosphate + H(+). In Vairimorpha ceranae (strain BRL01) (Microsporidian parasite), this protein is Probable phenylalanine--tRNA ligase beta subunit.